The primary structure comprises 973 residues: Translation initiation factor IF-2 (973 aa).

Basic and acidic residues predominate over residues 97–135 (GHIDLDGGQHKKQQEEPKAKEEPKVKEEPKVKEEPKVKE). Disordered regions lie at residues 97 to 343 (GHID…EDVQ) and 353 to 372 (LTNK…DKRD). Positions 136–155 (APAAPAAQAPVKPAQPAQAP) are enriched in low complexity. Basic and acidic residues-rich tracts occupy residues 156 to 175 (TEKK…KTVE), 183 to 204 (PKVE…DDNL), 212 to 224 (LESK…KIDL), and 237 to 250 (TKEE…EKQK). Low complexity predominate over residues 252–266 (NNNRPGNNSNGPGAP). 2 stretches are compositionally biased toward basic and acidic residues: residues 315–326 (PNRDDRPNNDRK) and 333–343 (VKAEVSEEDVQ). The region spanning 472–642 (ARPPIVTVMG…LLEADLLDLK (171 aa)) is the tr-type G domain. The G1 stretch occupies residues 481 to 488 (GHVDHGKT). 481–488 (GHVDHGKT) contacts GTP. Residues 506–510 (GITQH) are G2. The G3 stretch occupies residues 528-531 (DTPG). GTP-binding positions include 528–532 (DTPGH) and 582–585 (NKID). The interval 582-585 (NKID) is G4. The G5 stretch occupies residues 618-620 (SAK).

Belongs to the TRAFAC class translation factor GTPase superfamily. Classic translation factor GTPase family. IF-2 subfamily.

Its subcellular location is the cytoplasm. Functionally, one of the essential components for the initiation of protein synthesis. Protects formylmethionyl-tRNA from spontaneous hydrolysis and promotes its binding to the 30S ribosomal subunits. Also involved in the hydrolysis of GTP during the formation of the 70S ribosomal complex. This chain is Translation initiation factor IF-2, found in Parabacteroides distasonis (strain ATCC 8503 / DSM 20701 / CIP 104284 / JCM 5825 / NCTC 11152).